The sequence spans 306 residues: Methionyl-tRNA formyltransferase (306 aa).

108-111 (SLLP) provides a ligand contact to (6S)-5,6,7,8-tetrahydrofolate.

It belongs to the Fmt family.

The enzyme catalyses L-methionyl-tRNA(fMet) + (6R)-10-formyltetrahydrofolate = N-formyl-L-methionyl-tRNA(fMet) + (6S)-5,6,7,8-tetrahydrofolate + H(+). Its function is as follows. Attaches a formyl group to the free amino group of methionyl-tRNA(fMet). The formyl group appears to play a dual role in the initiator identity of N-formylmethionyl-tRNA by promoting its recognition by IF2 and preventing the misappropriation of this tRNA by the elongation apparatus. The polypeptide is Methionyl-tRNA formyltransferase (Pseudarthrobacter chlorophenolicus (strain ATCC 700700 / DSM 12829 / CIP 107037 / JCM 12360 / KCTC 9906 / NCIMB 13794 / A6) (Arthrobacter chlorophenolicus)).